Consider the following 151-residue polypeptide: Large ribosomal subunit protein uL22 (151 aa).

This sequence belongs to the universal ribosomal protein uL22 family. As to quaternary structure, part of the 50S ribosomal subunit.

In terms of biological role, this protein binds specifically to 23S rRNA. It makes multiple contacts with different domains of the 23S rRNA in the assembled 50S subunit and ribosome. Functionally, the globular domain of the protein is located near the polypeptide exit tunnel on the outside of the subunit, while an extended beta-hairpin is found that lines the wall of the exit tunnel in the center of the 70S ribosome. The sequence is that of Large ribosomal subunit protein uL22 from Thermoplasma acidophilum (strain ATCC 25905 / DSM 1728 / JCM 9062 / NBRC 15155 / AMRC-C165).